A 301-amino-acid polypeptide reads, in one-letter code: Polynucleotide kinase (301 aa).

Homotetramer. Requires Mg(2+) as cofactor.

It carries out the reaction a 5'-end dephospho-2'-deoxyribonucleoside-DNA + ATP = a 5'-end 5'-phospho-2'-deoxyribonucleoside-DNA + ADP + H(+). The catalysed reaction is a 2'-deoxyribonucleoside 3'-phosphate + H2O = a 2'-deoxyribonucleoside + phosphate. Its function is as follows. Acts as a 5'-hydroxyl kinase, a 3'-phosphatase and a 2',3'-cyclic phosphodiesterase. Catalyzes the transfer of the terminal phosphate of ATP to the 5'-hydroxyl termini of ribo- and deoxyribonucleotides. In the presence of ADP the enzyme also catalyzes an exchange reaction. In the exchange reaction, an excess ADP causes the enzyme to transfer the 5' terminal phosphate from phosphorylated DNA to ADP. Involved in countering a host defense mechanism which activates T4-induced anticodon nuclease and shuts off viral translation. The polynucleotide kinase modifies the ends of nicked tRNA generated by the antiviral response of the host bacteria and facilitates repair by T4 RNA ligase. The protein is Polynucleotide kinase (pseT) of Escherichia coli (Bacteriophage T4).